The following is a 46-amino-acid chain: Protein krueppel (46 aa).

3 consecutive C2H2-type zinc fingers follow at residues M1–H4, Y10–H32, and Y38–R46.

This sequence belongs to the krueppel C2H2-type zinc-finger protein family.

The protein localises to the nucleus. Functionally, krueppel is a gap class segmentation protein. The chain is Protein krueppel (Kr) from Pholcus phalangioides (Longbodied cellar spider).